A 507-amino-acid polypeptide reads, in one-letter code: Probable bifunctional methylthioribulose-1-phosphate dehydratase/enolase-phosphatase E1 (507 aa).

An N-acetylalanine modification is found at alanine 2. Residues 2-237 (AVAAAAMIGL…AIKLHQLGLD (236 aa)) are methylthioribulose-1-phosphate dehydratase. Cysteine 109 provides a ligand contact to substrate. 2 residues coordinate Zn(2+): histidine 127 and histidine 129. Glutamate 152 serves as the catalytic Proton donor/acceptor. Histidine 202 serves as a coordination point for Zn(2+). The enolase-phosphatase E1 stretch occupies residues 268–507 (IVLDIEGTTT…FKTVTSFSQI (240 aa)). Mg(2+)-binding residues include aspartate 271 and glutamate 273. Substrate contacts are provided by residues 406–407 (SS) and lysine 440. Aspartate 466 serves as a coordination point for Mg(2+).

It in the N-terminal section; belongs to the aldolase class II family. MtnB subfamily. The protein in the C-terminal section; belongs to the HAD-like hydrolase superfamily. MasA/MtnC family. It depends on Zn(2+) as a cofactor. The cofactor is Mg(2+).

The enzyme catalyses 5-(methylsulfanyl)-D-ribulose 1-phosphate = 5-methylsulfanyl-2,3-dioxopentyl phosphate + H2O. The catalysed reaction is 5-methylsulfanyl-2,3-dioxopentyl phosphate + H2O = 1,2-dihydroxy-5-(methylsulfanyl)pent-1-en-3-one + phosphate. It participates in amino-acid biosynthesis; L-methionine biosynthesis via salvage pathway; L-methionine from S-methyl-5-thio-alpha-D-ribose 1-phosphate: step 2/6. It functions in the pathway amino-acid biosynthesis; L-methionine biosynthesis via salvage pathway; L-methionine from S-methyl-5-thio-alpha-D-ribose 1-phosphate: step 3/6. Its pathway is amino-acid biosynthesis; L-methionine biosynthesis via salvage pathway; L-methionine from S-methyl-5-thio-alpha-D-ribose 1-phosphate: step 4/6. The sequence is that of Probable bifunctional methylthioribulose-1-phosphate dehydratase/enolase-phosphatase E1 from Arabidopsis thaliana (Mouse-ear cress).